The chain runs to 605 residues: Heparan-sulfate 6-O-sulfotransferase 2 (605 aa).

At 1-4 (MALP) the chain is on the cytoplasmic side. The interval 1-66 (MALPACAVRE…GVSHGFHTRP (66 aa)) is disordered. The helical; Signal-anchor for type II membrane protein transmembrane segment at 5–27 (ACAVREFEPPRQPERGAPVRTTC) threads the bilayer. Residues 9–18 (REFEPPRQPE) show a composition bias toward basic and acidic residues. Residues 28–605 (PRRHSRVEAE…DYIGSVEKWR (578 aa)) lie on the Lumenal side of the membrane. Asn-209 is a glycosylation site (N-linked (GlcNAc...) asparagine). 233–241 (HIQKTGGTT) serves as a coordination point for 3'-phosphoadenylyl sulfate. Residues 263–264 (KK), Arg-280, Trp-285, and His-290 each bind substrate. The Proton acceptor role is filled by His-290. 2 residues coordinate 3'-phosphoadenylyl sulfate: Arg-325 and Ser-333. Substrate contacts are provided by His-337 and Trp-344. The N-linked (GlcNAc...) asparagine glycan is linked to Asn-404. Position 457 to 459 (457 to 459 (TQY)) interacts with 3'-phosphoadenylyl sulfate. Asn-460 is a glycosylation site (N-linked (GlcNAc...) asparagine). 463-464 (RA) is a 3'-phosphoadenylyl sulfate binding site. The segment at 530 to 605 (FQSQGQGQSQ…DYIGSVEKWR (76 aa)) is disordered. Low complexity predominate over residues 531–571 (QSQGQGQSQNPNQNQSQNPNPNANQNLTQNLMQNLTQSLSQ). 5 N-linked (GlcNAc...) asparagine glycosylation sites follow: Asn-544, Asn-556, Asn-564, Asn-589, and Asn-592. Residues 579–597 (KQNSGKEQNDNTSNGTNDY) are compositionally biased toward polar residues.

Belongs to the sulfotransferase 6 family.

Its subcellular location is the membrane. The catalysed reaction is alpha-D-glucosaminyl-[heparan sulfate](n) + 3'-phosphoadenylyl sulfate = 6-sulfo-alpha-D-glucosaminyl-[heparan sulfate](n) + adenosine 3',5'-bisphosphate + H(+). 6-O-sulfation enzyme which catalyzes the transfer of sulfate from 3'-phosphoadenosine 5'-phosphosulfate (PAPS) to position 6 of the N-sulfoglucosamine residue (GlcNS) of heparan sulfate. The chain is Heparan-sulfate 6-O-sulfotransferase 2 from Homo sapiens (Human).